We begin with the raw amino-acid sequence, 1138 residues long: MNLNNLGGYEDSNRTLNNSLNYPTQKALSPSLKNMNYQDFLSITEREQPEALASGNTAINTVVSVTGATLSALGVPGASFITNFYLKITGLLWPHNKNIWDEFMTEVETLIEQKIEQYARNKALAELEGLGNNLTIYQQALEDWLNNPDDPATITRVIDRFRILDALFESYMPSFRVAGYEIPLLTVYAQAANLHLALLRDSTLYGDKWGFTQNNIEENYNRQKKHISEYSNHCVKWYNSGLSRLNGSTYEQWINYNRFRREMILMVLDIAAVFPIYDPRMYSMETSTQLTREVYTDPISLSISNPDIGPSFSQMENTAFRTPHLVDYLDELYIYTSKYKAFSHEIQPDLFYWCVHKVSFKKSEQSNLYTTGIYGKTSGYISSGAYSFRGNDIYRTLAAPSVVVYPYTQNYGVEQVEFYGVKGHVHYRGDNKYDLTYDSIDQLPPDGEPIHEKYTHRLCHATAISKSTPDYDNATIPIFSWTHRSAEYYNRIYPNKIKKIPAVKMYKLDDLSTVVKGPGFTGGDLVKRGSNGYIGDIKATVNSPLSQKYRVRVRYATSVSGLFNVFINDEIALQKNFQSTVETIGEGKDLTYGSFGYIEYSTTIQFPNEHPKITLHLNHLSNNSPFYVDSIEFIPVDVNYDEKEKLEKAQKAVNTLFTEGRNALQKYVTDYKVDQVSILVDCISGDLYPNEKRELQNLVKYAKRLSYSRNLLLDPTFDSINSSEENGWYGSNGIVIGNGDFVFKGNYLIFSGTNDTQYPTYLYQKIDESKLKEYSRYKLKGFIESSQDLEAYVIRYDAKHRTLDVSDNLLPDILPENTCGEPNRCAAQQYLDENPSSECSSMQDGILSDSHSFSLNIDTGSINHNENLGIWVLFKISTLEGYAKFGNLEVIEDGPVIGEALARVKRQETKWRNKLAQMTTETQAIYTRAKQALDNLFANAQDSHLKIDVTFAEIAAARKIVQSIREVYMSWLSVVPGVNHPIFTELSGRVQRAFQLYDVRNVVRNGRFLNGLSDWIVTSDVNVQEENGNNVLVLNNWDAQVLRNVKLYQDRGYVLRVTARKIGIGEGYITITDEEGHTDQLRFTACEEIDASNAFISGYITKELEFFPDTEKVHIEIGETEGIFLVESIELFLMEELC.

Belongs to the delta endotoxin family.

In terms of biological role, promotes colloidosmotic lysis by binding to the midgut epithelial cells of Coleoptera. In Bacillus thuringiensis subsp. dakota, this protein is Pesticidal crystal protein Cry7Ab (cry7Ab).